Reading from the N-terminus, the 275-residue chain is Transmembrane protein 45B (275 aa).

7 helical membrane passes run 7–27, 47–67, 94–114, 116–136, 146–166, 180–200, and 212–232; these read HALP…KYPL, IVEA…EQFV, LFFA…HVPL, VDRL…YYHV, IHSL…LEVI, LIIL…PPFG, and LMFI…IVAV. A phosphoserine mark is found at S270 and S272.

The protein belongs to the TMEM45 family. As to quaternary structure, (Microbial infection) Interacts with sindbis virus nsP1 and nsP4; these interactions lead to viral RNA replication inhibition. (Microbial infection) Interacts with chikungunya virus nsP1 and nsP4; these interactions lead to viral RNA replication inhibition.

It localises to the endosome membrane. Its subcellular location is the lysosome membrane. It is found in the golgi apparatus. The protein localises to the trans-Golgi network membrane. Plays a role in innate immunity. Mechanistically, promotes alphaviruses RNA degradation by interacting with the viral polymerase nsP4 and the mRNA-capping enzyme nsP1 and thereby interfering with the interaction between viral RNA and nsP1. This chain is Transmembrane protein 45B (TMEM45B), found in Homo sapiens (Human).